A 259-amino-acid polypeptide reads, in one-letter code: Protein GrpE (259 aa).

Disordered stretches follow at residues 1-75 and 227-259; these read MNSD…KGSD and GPGP…KDEN. Residues 20 to 40 show a composition bias toward low complexity; sequence NNPSENFVSSSNSNESVNQVE. The span at 46 to 60 shows a compositional bias: basic and acidic residues; the sequence is EVEHQVKNDSVDTAK. Residues 61–73 show a composition bias toward polar residues; the sequence is EQSSTSCESNIKG.

This sequence belongs to the GrpE family. In terms of assembly, homodimer.

The protein resides in the cytoplasm. Functionally, participates actively in the response to hyperosmotic and heat shock by preventing the aggregation of stress-denatured proteins, in association with DnaK and GrpE. It is the nucleotide exchange factor for DnaK and may function as a thermosensor. Unfolded proteins bind initially to DnaJ; upon interaction with the DnaJ-bound protein, DnaK hydrolyzes its bound ATP, resulting in the formation of a stable complex. GrpE releases ADP from DnaK; ATP binding to DnaK triggers the release of the substrate protein, thus completing the reaction cycle. Several rounds of ATP-dependent interactions between DnaJ, DnaK and GrpE are required for fully efficient folding. This is Protein GrpE from Prochlorococcus marinus (strain NATL1A).